Here is a 1297-residue protein sequence, read N- to C-terminus: Phosphoribosylformylglycinamidine synthase (1297 aa).

Residues 307–318 and A678 each bind ATP; that span reads GASTGSGGEIRD. E718, N722, and D886 together coordinate Mg(2+). Positions 1044-1297 constitute a Glutamine amidotransferase type-1 domain; the sequence is MAILREQGVN…MFQNARKNLG (254 aa). Residue C1137 is the Nucleophile of the active site. Catalysis depends on residues H1262 and E1264.

In the N-terminal section; belongs to the FGAMS family. Monomer.

Its subcellular location is the cytoplasm. It catalyses the reaction N(2)-formyl-N(1)-(5-phospho-beta-D-ribosyl)glycinamide + L-glutamine + ATP + H2O = 2-formamido-N(1)-(5-O-phospho-beta-D-ribosyl)acetamidine + L-glutamate + ADP + phosphate + H(+). It functions in the pathway purine metabolism; IMP biosynthesis via de novo pathway; 5-amino-1-(5-phospho-D-ribosyl)imidazole from N(2)-formyl-N(1)-(5-phospho-D-ribosyl)glycinamide: step 1/2. In terms of biological role, phosphoribosylformylglycinamidine synthase involved in the purines biosynthetic pathway. Catalyzes the ATP-dependent conversion of formylglycinamide ribonucleotide (FGAR) and glutamine to yield formylglycinamidine ribonucleotide (FGAM) and glutamate. The polypeptide is Phosphoribosylformylglycinamidine synthase (Vibrio vulnificus (strain CMCP6)).